The following is a 366-amino-acid chain: Quinolinate synthase (366 aa).

Iminosuccinate is bound by residues H44 and S61. C108 is a binding site for [4Fe-4S] cluster. Iminosuccinate contacts are provided by residues 139-141 (YVN) and S160. C228 serves as a coordination point for [4Fe-4S] cluster. Residues 254–256 (HPE) and T271 contribute to the iminosuccinate site. C318 contributes to the [4Fe-4S] cluster binding site.

Belongs to the quinolinate synthase family. Type 3 subfamily. Requires [4Fe-4S] cluster as cofactor.

It is found in the cytoplasm. It catalyses the reaction iminosuccinate + dihydroxyacetone phosphate = quinolinate + phosphate + 2 H2O + H(+). The protein operates within cofactor biosynthesis; NAD(+) biosynthesis; quinolinate from iminoaspartate: step 1/1. Catalyzes the condensation of iminoaspartate with dihydroxyacetone phosphate to form quinolinate. The protein is Quinolinate synthase of Staphylococcus carnosus (strain TM300).